A 487-amino-acid polypeptide reads, in one-letter code: N-succinylglutamate 5-semialdehyde dehydrogenase (487 aa).

Gly221–Gly226 serves as a coordination point for NAD(+). Residues Glu244 and Cys278 contribute to the active site.

Belongs to the aldehyde dehydrogenase family. AstD subfamily.

It carries out the reaction N-succinyl-L-glutamate 5-semialdehyde + NAD(+) + H2O = N-succinyl-L-glutamate + NADH + 2 H(+). It functions in the pathway amino-acid degradation; L-arginine degradation via AST pathway; L-glutamate and succinate from L-arginine: step 4/5. Its function is as follows. Catalyzes the NAD-dependent reduction of succinylglutamate semialdehyde into succinylglutamate. This is N-succinylglutamate 5-semialdehyde dehydrogenase from Burkholderia vietnamiensis (strain G4 / LMG 22486) (Burkholderia cepacia (strain R1808)).